A 245-amino-acid chain; its full sequence is Phosphoribosylaminoimidazole-succinocarboxamide synthase (245 aa).

It belongs to the SAICAR synthetase family.

The enzyme catalyses 5-amino-1-(5-phospho-D-ribosyl)imidazole-4-carboxylate + L-aspartate + ATP = (2S)-2-[5-amino-1-(5-phospho-beta-D-ribosyl)imidazole-4-carboxamido]succinate + ADP + phosphate + 2 H(+). The protein operates within purine metabolism; IMP biosynthesis via de novo pathway; 5-amino-1-(5-phospho-D-ribosyl)imidazole-4-carboxamide from 5-amino-1-(5-phospho-D-ribosyl)imidazole-4-carboxylate: step 1/2. The polypeptide is Phosphoribosylaminoimidazole-succinocarboxamide synthase (Trichormus variabilis (strain ATCC 29413 / PCC 7937) (Anabaena variabilis)).